We begin with the raw amino-acid sequence, 345 residues long: tRNA-specific 2-thiouridylase MnmA 1 (345 aa).

ATP is bound by residues 9 to 16 and leucine 35; that span reads GMSGGIDS. Cysteine 96 acts as the Nucleophile in catalysis. Cysteine 96 and cysteine 191 form a disulfide bridge. Glycine 120 provides a ligand contact to ATP. The interval 138–140 is interaction with tRNA; sequence KDQ. The Cysteine persulfide intermediate role is filled by cysteine 191. Residues 293 to 294 form an interaction with tRNA region; the sequence is RY.

This sequence belongs to the MnmA/TRMU family.

The protein resides in the cytoplasm. The enzyme catalyses S-sulfanyl-L-cysteinyl-[protein] + uridine(34) in tRNA + AH2 + ATP = 2-thiouridine(34) in tRNA + L-cysteinyl-[protein] + A + AMP + diphosphate + H(+). Catalyzes the 2-thiolation of uridine at the wobble position (U34) of tRNA, leading to the formation of s(2)U34. The chain is tRNA-specific 2-thiouridylase MnmA 1 from Aliarcobacter butzleri (strain RM4018) (Arcobacter butzleri).